The following is a 402-amino-acid chain: Speedy protein E5 (402 aa).

The interval 1-89 is disordered; the sequence is MDRTETRFRK…EEPEKELAPE (89 aa). Polar residues predominate over residues 16 to 39; it reads EKITTSRQPQPQNEQSPQRSTSGY. Positions 76-89 are enriched in acidic residues; sequence DESAEEPEKELAPE.

This sequence belongs to the Speedy/Ringo family.

The polypeptide is Speedy protein E5 (SPDYE5) (Homo sapiens (Human)).